The primary structure comprises 180 residues: Hypoxanthine-guanine phosphoribosyltransferase (180 aa).

Diphosphate-binding residues include Lys43 and Gly44. Residues Glu99 and Asp100 each coordinate Mg(2+). Asp103 functions as the Proton acceptor in the catalytic mechanism. GMP is bound by residues Lys131, 152–153 (FI), and Asp159. Diphosphate is bound at residue Arg165.

This sequence belongs to the purine/pyrimidine phosphoribosyltransferase family. The cofactor is Mg(2+).

It is found in the cytoplasm. It carries out the reaction IMP + diphosphate = hypoxanthine + 5-phospho-alpha-D-ribose 1-diphosphate. The catalysed reaction is GMP + diphosphate = guanine + 5-phospho-alpha-D-ribose 1-diphosphate. It functions in the pathway purine metabolism; IMP biosynthesis via salvage pathway; IMP from hypoxanthine: step 1/1. It participates in purine metabolism; GMP biosynthesis via salvage pathway; GMP from guanine: step 1/1. Functionally, purine salvage pathway enzyme that catalyzes the transfer of the ribosyl-5-phosphate group from 5-phospho-alpha-D-ribose 1-diphosphate (PRPP) to the N9 position of the 6-oxopurines hypoxanthine and guanine to form the corresponding ribonucleotides IMP (inosine 5'-monophosphate) and GMP (guanosine 5'-monophosphate), with the release of PPi. The polypeptide is Hypoxanthine-guanine phosphoribosyltransferase (hpt) (Streptococcus mutans serotype c (strain ATCC 700610 / UA159)).